A 225-amino-acid polypeptide reads, in one-letter code: Insulin-induced gene 2 protein (225 aa).

The Cytoplasmic portion of the chain corresponds to 1–28; the sequence is MAEGETESPRPKKRGPYISSVTSQSVNV. A helical membrane pass occupies residues 29 to 51; that stretch reads VIRGVVLFFIGVFLALVLNLLQI. Residues 52–70 are Lumenal-facing; that stretch reads QRNVTLFPPDVITSIFSSA. A helical membrane pass occupies residues 71–88; sequence WWVPPCCGTASAVIGLLY. The Cytoplasmic segment spans residues 89–103; the sequence is PCIDRHLGEPHKFKR. The chain crosses the membrane as a helical span at residues 104-126; it reads EWSSVMRCVAVFVGINHASAKVD. Residues 127 to 129 are Lumenal-facing; that stretch reads FDN. The chain crosses the membrane as a helical span at residues 130–148; it reads NFQFSLTLAALSVGLWWTF. Over 149-153 the chain is Cytoplasmic; it reads DRSRS. Ser151 carries the post-translational modification Phosphoserine. The chain crosses the membrane as a helical span at residues 154–175; it reads GFGLGVGIAFLATVVTQLLVYN. The Lumenal portion of the chain corresponds to 176–189; the sequence is GVYQYTSPDFLYVR. The helical transmembrane segment at 190–207 threads the bilayer; that stretch reads SWLPCIFFAGGITMGNIG. Topologically, residues 208–225 are cytoplasmic; that stretch reads RQLAMYECKVIAEKSHQE. Cys215 bears the Cysteine sulfenic acid (-SOH); alternate mark. Residue Cys215 forms a Glycyl cysteine thioester (Cys-Gly) (interchain with G-Cter in ubiquitin); alternate linkage. The KxHxx motif lies at 219-225; the sequence is AEKSHQE.

This sequence belongs to the INSIG family. In terms of assembly, interacts with SCAP; interaction is direct and only takes place in the presence of sterols; it prevents interaction between SCAP and the coat protein complex II (COPII). Associates with the SCAP-SREBP complex (composed of SCAP and SREBF1/SREBP1 or SREBF2/SREBP2); association is mediated via its interaction with SCAP and only takes place in the presence of sterols. Interacts with RNF139. Interacts with RNF145. Phosphorylation at Ser-151 by PCK1 reduces binding to oxysterol, disrupting the interaction between INSIG2 and SCAP, thereby promoting nuclear translocation of SREBP proteins (SREBF1/SREBP1 or SREBF2/SREBP2) and subsequent transcription of downstream lipogenesis-related genes. In terms of processing, polyubiquitinated by AMFR/gp78 at Cys-215 in some tissues such as adipose tissues, undifferentiated myoblasts and liver, leading to its degradation. In differentiated myotubes, Cys-215 oxidation prevents ubiquitination at the same site, resulting in protein stabilization. Post-translationally, oxidized at Cys-215 in differentiated myotubes, preventing ubiquitination at the same site, and resulting in protein stabilization.

The protein localises to the endoplasmic reticulum membrane. Functionally, oxysterol-binding protein that mediates feedback control of cholesterol synthesis by controlling both endoplasmic reticulum to Golgi transport of SCAP and degradation of HMGCR. Acts as a negative regulator of cholesterol biosynthesis by mediating the retention of the SCAP-SREBP complex in the endoplasmic reticulum, thereby blocking the processing of sterol regulatory element-binding proteins (SREBPs) SREBF1/SREBP1 and SREBF2/SREBP2. Binds oxysterol, including 22-hydroxycholesterol, 24-hydroxycholesterol, 25-hydroxycholesterol and 27-hydroxycholesterol, regulating interaction with SCAP and retention of the SCAP-SREBP complex in the endoplasmic reticulum. In presence of oxysterol, interacts with SCAP, retaining the SCAP-SREBP complex in the endoplasmic reticulum, thereby preventing SCAP from escorting SREBF1/SREBP1 and SREBF2/SREBP2 to the Golgi. Sterol deprivation or phosphorylation by PCK1 reduce oxysterol-binding, disrupting the interaction between INSIG2 and SCAP, thereby promoting Golgi transport of the SCAP-SREBP complex, followed by processing and nuclear translocation of SREBF1/SREBP1 and SREBF2/SREBP2. Also regulates cholesterol synthesis by regulating degradation of HMGCR: initiates the sterol-mediated ubiquitin-mediated endoplasmic reticulum-associated degradation (ERAD) of HMGCR via recruitment of the reductase to the ubiquitin ligase RNF139. This Rattus norvegicus (Rat) protein is Insulin-induced gene 2 protein.